Here is a 436-residue protein sequence, read N- to C-terminus: Methylenetetrahydrofolate--tRNA-(uracil-5-)-methyltransferase TrmFO (436 aa).

11–16 (GAGLAG) is an FAD binding site.

This sequence belongs to the MnmG family. TrmFO subfamily. Requires FAD as cofactor.

Its subcellular location is the cytoplasm. The enzyme catalyses uridine(54) in tRNA + (6R)-5,10-methylene-5,6,7,8-tetrahydrofolate + NADH + H(+) = 5-methyluridine(54) in tRNA + (6S)-5,6,7,8-tetrahydrofolate + NAD(+). It catalyses the reaction uridine(54) in tRNA + (6R)-5,10-methylene-5,6,7,8-tetrahydrofolate + NADPH + H(+) = 5-methyluridine(54) in tRNA + (6S)-5,6,7,8-tetrahydrofolate + NADP(+). In terms of biological role, catalyzes the folate-dependent formation of 5-methyl-uridine at position 54 (M-5-U54) in all tRNAs. The sequence is that of Methylenetetrahydrofolate--tRNA-(uracil-5-)-methyltransferase TrmFO from Shouchella clausii (strain KSM-K16) (Alkalihalobacillus clausii).